The following is a 98-amino-acid chain: uncharacterized protein (98 aa).

One can recognise an MOSC domain in the interval 30–98; it reads KKVVPSVKIH…RRKFCRVRLE (69 aa).

This is an uncharacterized protein from Haemophilus influenzae (strain ATCC 51907 / DSM 11121 / KW20 / Rd).